The chain runs to 696 residues: DNA ligase (696 aa).

NAD(+)-binding positions include 36-40, 85-86, and Glu-123; these read DAEYD and SL. The active-site N6-AMP-lysine intermediate is the Lys-125. Residues Arg-146, Glu-181, Lys-319, and Lys-343 each coordinate NAD(+). Residues Cys-437, Cys-440, Cys-455, and Cys-461 each contribute to the Zn(2+) site. Residues 618–696 form the BRCT domain; that stretch reads PEGTSLAGKT…EDGLKALLGL (79 aa).

It belongs to the NAD-dependent DNA ligase family. LigA subfamily. The cofactor is Mg(2+). Mn(2+) is required as a cofactor.

It catalyses the reaction NAD(+) + (deoxyribonucleotide)n-3'-hydroxyl + 5'-phospho-(deoxyribonucleotide)m = (deoxyribonucleotide)n+m + AMP + beta-nicotinamide D-nucleotide.. DNA ligase that catalyzes the formation of phosphodiester linkages between 5'-phosphoryl and 3'-hydroxyl groups in double-stranded DNA using NAD as a coenzyme and as the energy source for the reaction. It is essential for DNA replication and repair of damaged DNA. This Bordetella bronchiseptica (strain ATCC BAA-588 / NCTC 13252 / RB50) (Alcaligenes bronchisepticus) protein is DNA ligase.